The primary structure comprises 640 residues: Threonine--tRNA ligase (640 aa).

The 61-residue stretch at 1-61 (MPIITLPDGS…ERDATLQIIT (61 aa)) folds into the TGS domain. The interval 242-533 (DHRRIGKQLD…LIEHYAGAFP (292 aa)) is catalytic. 3 residues coordinate Zn(2+): Cys-333, His-384, and His-510.

Belongs to the class-II aminoacyl-tRNA synthetase family. In terms of assembly, homodimer. Requires Zn(2+) as cofactor.

The protein localises to the cytoplasm. The enzyme catalyses tRNA(Thr) + L-threonine + ATP = L-threonyl-tRNA(Thr) + AMP + diphosphate + H(+). Catalyzes the attachment of threonine to tRNA(Thr) in a two-step reaction: L-threonine is first activated by ATP to form Thr-AMP and then transferred to the acceptor end of tRNA(Thr). Also edits incorrectly charged L-seryl-tRNA(Thr). The sequence is that of Threonine--tRNA ligase from Pseudomonas paraeruginosa (strain DSM 24068 / PA7) (Pseudomonas aeruginosa (strain PA7)).